The sequence spans 104 residues: Large ribosomal subunit protein bL21 (104 aa).

This sequence belongs to the bacterial ribosomal protein bL21 family. As to quaternary structure, part of the 50S ribosomal subunit. Contacts protein L20.

This protein binds to 23S rRNA in the presence of protein L20. The protein is Large ribosomal subunit protein bL21 of Helicobacter pylori (strain G27).